The chain runs to 215 residues: Large ribosomal subunit protein uL3 (215 aa).

N5-methylglutamine is present on Q156.

The protein belongs to the universal ribosomal protein uL3 family. As to quaternary structure, part of the 50S ribosomal subunit. Forms a cluster with proteins L14 and L19. In terms of processing, methylated by PrmB.

One of the primary rRNA binding proteins, it binds directly near the 3'-end of the 23S rRNA, where it nucleates assembly of the 50S subunit. The sequence is that of Large ribosomal subunit protein uL3 from Xylella fastidiosa (strain M12).